The following is a 579-amino-acid chain: V-type ATP synthase alpha chain (579 aa).

227–234 lines the ATP pocket; it reads GGFGTGKT.

The protein belongs to the ATPase alpha/beta chains family.

It catalyses the reaction ATP + H2O + 4 H(+)(in) = ADP + phosphate + 5 H(+)(out). Produces ATP from ADP in the presence of a proton gradient across the membrane. The V-type alpha chain is a catalytic subunit. The chain is V-type ATP synthase alpha chain from Anaeromyxobacter sp. (strain K).